The chain runs to 614 residues: Jacalin-related lectin 14 (614 aa).

Jacalin-type lectin domains are found at residues 27–169, 172–314, 317–462, and 468–611; these read VQKM…YFSW, PRKM…YFTT, PTKS…YFSP, and AEKL…HVVP.

Belongs to the jacalin lectin family.

In Arabidopsis thaliana (Mouse-ear cress), this protein is Jacalin-related lectin 14 (JAL14).